Here is a 426-residue protein sequence, read N- to C-terminus: MALRSITKLETFLKRYSAPTLYYCLHRSTQSSTCNSTNTDNGSHNTNYNSSNNNNNNNDNKRFSWRSAIRFLVPFSLGALASSVVAGDRELMPTISAKTLTNNRRDFNFIADVVASCADSVVYIEIKDTRHFDYFSGQPITASNGSGFVIEQNGLILTNAHVVINKPNTMVQVRLSDGRTFPATIEDVDQTSDLATLRIQVTNLSVMKLGKSSTLRSGEWVVALGSPLALSNTVTAGVISSTQRASQELGLRNRDINYLQTDAAITFGNSGGPLVNLDGEAIGVNSMKVTAGISFAIPIDYVKLFLERAAARRKKGSAYKTGYPVKRYMGITMLTLTPDILFELKSRTQNMPETLSHGVLVWKVIVGSPAHSGGLQPGDIVTHINKKEIKNSSDVYDALADGKKDLDMVILRGVKQMRVTITPEDP.

A compositionally biased stretch (low complexity) spans 31–58 (SSTCNSTNTDNGSHNTNYNSSNNNNNNN). Residues 31-59 (SSTCNSTNTDNGSHNTNYNSSNNNNNNND) are disordered. Residues 71–87 (FLVPFSLGALASSVVAG) traverse the membrane as a helical segment. Residues 79 to 82 (ALAS) carry the IAP-binding motif. The interval 143–306 (SNGSGFVIEQ…IPIDYVKLFL (164 aa)) is serine protease. Catalysis depends on charge relay system residues H161, D193, and S270. The region spanning 329-414 (MGITMLTLTP…DLDMVILRGV (86 aa)) is the PDZ domain.

The protein belongs to the peptidase S1C family. In terms of assembly, interacts with th/DIAP1 (via BIR 2 domain).

The protein localises to the mitochondrion intermembrane space. Its subcellular location is the mitochondrion membrane. The catalysed reaction is Cleavage of non-polar aliphatic amino-acids at the P1 position, with a preference for Val, Ile and Met. At the P2 and P3 positions, Arg is selected most strongly with a secondary preference for other hydrophilic residues.. In terms of biological role, serine protease that shows proteolytic activity against a non-specific substrate beta-casein. Promotes or induces cell death either by direct binding to and inhibition of BIRC proteins (also called inhibitor of apoptosis proteins, IAPs), leading to an increase in caspase activity, or by a BIRC inhibition-independent, caspase-independent and serine protease activity-dependent mechanism. Can antagonize antiapoptotic activity of th/Diap1 by directly inducing the degradation of th/Diap1. The protein is Serine protease HTRA2, mitochondrial of Drosophila grimshawi (Hawaiian fruit fly).